Here is a 120-residue protein sequence, read N- to C-terminus: Large ribosomal subunit protein uL18 (120 aa).

The protein belongs to the universal ribosomal protein uL18 family. As to quaternary structure, part of the 50S ribosomal subunit; part of the 5S rRNA/L5/L18/L25 subcomplex. Contacts the 5S and 23S rRNAs.

In terms of biological role, this is one of the proteins that bind and probably mediate the attachment of the 5S RNA into the large ribosomal subunit, where it forms part of the central protuberance. The chain is Large ribosomal subunit protein uL18 from Hyphomonas neptunium (strain ATCC 15444).